Reading from the N-terminus, the 188-residue chain is Dual specificity protein phosphatase 18 (188 aa).

One can recognise a Tyrosine-protein phosphatase domain in the interval 19–160 (GLSQITKSLF…LIHYELQLFG (142 aa)). The tract at residues 95-141 (MQKGRTLLHCAAGVSRSAALCLAYLMKYHAMSLVDAHTWTKSCRPII) is sufficient for mitochondrial localization. C104 (phosphocysteine intermediate) is an active-site residue.

Belongs to the protein-tyrosine phosphatase family. Non-receptor class dual specificity subfamily.

It is found in the cytoplasm. The protein resides in the nucleus. Its subcellular location is the mitochondrion inner membrane. It carries out the reaction O-phospho-L-tyrosyl-[protein] + H2O = L-tyrosyl-[protein] + phosphate. The enzyme catalyses O-phospho-L-seryl-[protein] + H2O = L-seryl-[protein] + phosphate. The catalysed reaction is O-phospho-L-threonyl-[protein] + H2O = L-threonyl-[protein] + phosphate. Can dephosphorylate single and diphosphorylated synthetic MAPK peptides, with preference for the phosphotyrosine and diphosphorylated forms over phosphothreonine. In vitro, dephosphorylates p-nitrophenyl phosphate (pNPP). The polypeptide is Dual specificity protein phosphatase 18 (Dusp18) (Mus musculus (Mouse)).